The sequence spans 569 residues: BTB/POZ domain-containing protein At3g50840 (569 aa).

The 70-residue stretch at 18–87 (SDIEIEVDDI…SYGFKVDISV (70 aa)) folds into the BTB domain. In terms of domain architecture, NPH3 spans 194-459 (ELWFEDLTEL…VQVLFLEQLQ (266 aa)). The span at 240-259 (ISRSSSASSSSSSSSTTIAS) shows a compositional bias: low complexity. Positions 240–261 (ISRSSSASSSSSSSSTTIASEN) are disordered. Tyr400 is subject to Phosphotyrosine.

It belongs to the NPH3 family.

It participates in protein modification; protein ubiquitination. Functionally, may act as a substrate-specific adapter of an E3 ubiquitin-protein ligase complex (CUL3-RBX1-BTB) which mediates the ubiquitination and subsequent proteasomal degradation of target proteins. The sequence is that of BTB/POZ domain-containing protein At3g50840 from Arabidopsis thaliana (Mouse-ear cress).